A 196-amino-acid polypeptide reads, in one-letter code: Probable GTP-binding protein EngB (196 aa).

The 174-residue stretch at 22–195 folds into the EngB-type G domain; it reads NIPEIALVGR…WQWIEERMGK (174 aa). GTP is bound by residues 30–37, 57–61, 75–78, 142–145, and 174–176; these read GRSNVGKS, GKTQT, DVPG, TKID, and FSA. The Mg(2+) site is built by S37 and T59.

Belongs to the TRAFAC class TrmE-Era-EngA-EngB-Septin-like GTPase superfamily. EngB GTPase family. It depends on Mg(2+) as a cofactor.

In terms of biological role, necessary for normal cell division and for the maintenance of normal septation. The polypeptide is Probable GTP-binding protein EngB (Limosilactobacillus reuteri (strain DSM 20016) (Lactobacillus reuteri)).